The sequence spans 378 residues: Glutamate 5-kinase (378 aa).

Lys20 contacts ATP. The substrate site is built by Ser60, Asp147, and Asn159. Residues 179–180 and 221–227 each bind ATP; these read TD and TGGMLTK. A PUA domain is found at 286-364; that stretch reads RGRVVLDDGA…SQIARILGSM (79 aa).

Belongs to the glutamate 5-kinase family.

It localises to the cytoplasm. It carries out the reaction L-glutamate + ATP = L-glutamyl 5-phosphate + ADP. The protein operates within amino-acid biosynthesis; L-proline biosynthesis; L-glutamate 5-semialdehyde from L-glutamate: step 1/2. Catalyzes the transfer of a phosphate group to glutamate to form L-glutamate 5-phosphate. The polypeptide is Glutamate 5-kinase (Bordetella parapertussis (strain 12822 / ATCC BAA-587 / NCTC 13253)).